The primary structure comprises 542 residues: MTRYIFVTGGVVSSLGKGIASASLAAILEARGLKVTILKLDPYINVDPGTMSPFQHGEVFVTEDGAETDLDLGHYERFIRTPMTKRNNFTTGRVYEEVIRKERRGDYLGGTVQVIPHITDEIKRRVVEGAAGADVALIEVGGTVGDIESLPFLEACRQLKVEVGSQRALFMHLTLVPYIATAGEIKTKPTQHSVKEMRSIGLQPDILLCRSEHEVDASSRRKIALFTNVEERAVIPMQDARSIYAIPRMLHEYGLDQLVIERFGLDAREADLSEWDAVVDSLMNPQDEVTIAMVGKYMELLDAYKSLIESLLHAGIKTRTKVNINYIDSEDIERDGTSVLESADAILVPGGFGERGVEGKIRTVQYARENKVPYLGICLGMQVAVIEYARNVAGLKDAHSTEFREHTPEPVVGLITEWLDATGEKEERTEESDLGGTMRLGAQDCVLTEGSTIVGCYGKKTIRERHRHRYEVNNHFLPRLEEAGLQISGRSADGKLVEVVEAPDHPWFVACQFHPEFTSTPRDGHPLFKGFVEAALANKKGS.

The tract at residues 1 to 265 (MTRYIFVTGG…DQLVIERFGL (265 aa)) is amidoligase domain. Serine 13 contacts CTP. Residue serine 13 coordinates UTP. ATP is bound by residues 14-19 (SLGKGI) and aspartate 71. The Mg(2+) site is built by aspartate 71 and glutamate 139. CTP-binding positions include 146 to 148 (DIE), 186 to 191 (KTKPTQ), and lysine 222. Residues 186–191 (KTKPTQ) and lysine 222 contribute to the UTP site. The region spanning 290 to 541 (TIAMVGKYME…VEAALANKKG (252 aa)) is the Glutamine amidotransferase type-1 domain. Glycine 351 is a binding site for L-glutamine. The Nucleophile; for glutamine hydrolysis role is filled by cysteine 378. Residues 379-382 (LGMQ), glutamate 402, and arginine 469 contribute to the L-glutamine site. Catalysis depends on residues histidine 514 and glutamate 516.

Belongs to the CTP synthase family. In terms of assembly, homotetramer.

The catalysed reaction is UTP + L-glutamine + ATP + H2O = CTP + L-glutamate + ADP + phosphate + 2 H(+). It carries out the reaction L-glutamine + H2O = L-glutamate + NH4(+). The enzyme catalyses UTP + NH4(+) + ATP = CTP + ADP + phosphate + 2 H(+). It functions in the pathway pyrimidine metabolism; CTP biosynthesis via de novo pathway; CTP from UDP: step 2/2. Its activity is regulated as follows. Allosterically activated by GTP, when glutamine is the substrate; GTP has no effect on the reaction when ammonia is the substrate. The allosteric effector GTP functions by stabilizing the protein conformation that binds the tetrahedral intermediate(s) formed during glutamine hydrolysis. Inhibited by the product CTP, via allosteric rather than competitive inhibition. Catalyzes the ATP-dependent amination of UTP to CTP with either L-glutamine or ammonia as the source of nitrogen. Regulates intracellular CTP levels through interactions with the four ribonucleotide triphosphates. This is CTP synthase from Marinobacter nauticus (strain ATCC 700491 / DSM 11845 / VT8) (Marinobacter aquaeolei).